The chain runs to 439 residues: Xylose isomerase (439 aa).

Residues His101 and Asp104 contribute to the active site. Mg(2+) contacts are provided by Glu232, Glu268, His271, Asp296, Asp307, Asp309, and Asp339.

It belongs to the xylose isomerase family. In terms of assembly, homotetramer. It depends on Mg(2+) as a cofactor.

The protein resides in the cytoplasm. The catalysed reaction is alpha-D-xylose = alpha-D-xylulofuranose. The polypeptide is Xylose isomerase (Serratia proteamaculans (strain 568)).